A 144-amino-acid chain; its full sequence is Ribonuclease H (144 aa).

The 141-residue stretch at 1–141 (MKKVEIFTDG…ADRLASEAAD (141 aa)) folds into the RNase H type-1 domain. 4 residues coordinate Mg(2+): D9, E47, D69, and D133.

This sequence belongs to the RNase H family. As to quaternary structure, monomer. Mg(2+) is required as a cofactor.

It localises to the cytoplasm. The catalysed reaction is Endonucleolytic cleavage to 5'-phosphomonoester.. In terms of biological role, endonuclease that specifically degrades the RNA of RNA-DNA hybrids. This is Ribonuclease H from Erythrobacter litoralis (strain HTCC2594).